A 493-amino-acid chain; its full sequence is Lysine--tRNA ligase (493 aa).

Mg(2+) is bound by residues Glu-402 and Glu-409.

This sequence belongs to the class-II aminoacyl-tRNA synthetase family. As to quaternary structure, homodimer. Requires Mg(2+) as cofactor.

The protein localises to the cytoplasm. The enzyme catalyses tRNA(Lys) + L-lysine + ATP = L-lysyl-tRNA(Lys) + AMP + diphosphate. This is Lysine--tRNA ligase from Ureaplasma parvum serovar 3 (strain ATCC 27815 / 27 / NCTC 11736).